The sequence spans 258 residues: Hydroxyacylglutathione hydrolase (258 aa).

7 residues coordinate Zn(2+): H55, H57, D59, H60, H115, D132, and H170.

Belongs to the metallo-beta-lactamase superfamily. Glyoxalase II family. In terms of assembly, monomer. The cofactor is Zn(2+).

It carries out the reaction an S-(2-hydroxyacyl)glutathione + H2O = a 2-hydroxy carboxylate + glutathione + H(+). It functions in the pathway secondary metabolite metabolism; methylglyoxal degradation; (R)-lactate from methylglyoxal: step 2/2. Thiolesterase that catalyzes the hydrolysis of S-D-lactoyl-glutathione to form glutathione and D-lactic acid. In Shewanella halifaxensis (strain HAW-EB4), this protein is Hydroxyacylglutathione hydrolase.